A 279-amino-acid polypeptide reads, in one-letter code: 4-diphosphocytidyl-2-C-methyl-D-erythritol kinase (279 aa).

Residue Lys11 is part of the active site. 95–105 (PVAAGLGGGSS) serves as a coordination point for ATP. The active site involves Asp137.

Belongs to the GHMP kinase family. IspE subfamily.

The enzyme catalyses 4-CDP-2-C-methyl-D-erythritol + ATP = 4-CDP-2-C-methyl-D-erythritol 2-phosphate + ADP + H(+). The protein operates within isoprenoid biosynthesis; isopentenyl diphosphate biosynthesis via DXP pathway; isopentenyl diphosphate from 1-deoxy-D-xylulose 5-phosphate: step 3/6. In terms of biological role, catalyzes the phosphorylation of the position 2 hydroxy group of 4-diphosphocytidyl-2C-methyl-D-erythritol. In Geotalea daltonii (strain DSM 22248 / JCM 15807 / FRC-32) (Geobacter daltonii), this protein is 4-diphosphocytidyl-2-C-methyl-D-erythritol kinase.